Reading from the N-terminus, the 227-residue chain is Cytochrome c oxidase subunit 2 (227 aa).

At 1 to 14 the chain is on the mitochondrial intermembrane side; sequence MAHPVQLSLQDATS. A helical membrane pass occupies residues 15 to 45; the sequence is PIMEELITFHDHAFMAMSLISFLVLYALALT. At 46-59 the chain is on the mitochondrial matrix side; sequence LTTKLTNTNITDAQ. A helical membrane pass occupies residues 60 to 87; the sequence is EMETIWTILPAVILILIALPSLRVLYLT. The Mitochondrial intermembrane segment spans residues 88–227; it reads DEVNDPSLTI…IFEMGPVFTL (140 aa). Positions 161, 196, 198, 200, 204, and 207 each coordinate Cu cation. Residue Glu-198 participates in Mg(2+) binding.

This sequence belongs to the cytochrome c oxidase subunit 2 family. As to quaternary structure, component of the cytochrome c oxidase (complex IV, CIV), a multisubunit enzyme composed of 14 subunits. The complex is composed of a catalytic core of 3 subunits MT-CO1, MT-CO2 and MT-CO3, encoded in the mitochondrial DNA, and 11 supernumerary subunits COX4I, COX5A, COX5B, COX6A, COX6B, COX6C, COX7A, COX7B, COX7C, COX8 and NDUFA4, which are encoded in the nuclear genome. The complex exists as a monomer or a dimer and forms supercomplexes (SCs) in the inner mitochondrial membrane with NADH-ubiquinone oxidoreductase (complex I, CI) and ubiquinol-cytochrome c oxidoreductase (cytochrome b-c1 complex, complex III, CIII), resulting in different assemblies (supercomplex SCI(1)III(2)IV(1) and megacomplex MCI(2)III(2)IV(2)). Found in a complex with TMEM177, COA6, COX18, COX20, SCO1 and SCO2. Interacts with TMEM177 in a COX20-dependent manner. Interacts with COX20. Interacts with COX16. Cu cation is required as a cofactor.

Its subcellular location is the mitochondrion inner membrane. The catalysed reaction is 4 Fe(II)-[cytochrome c] + O2 + 8 H(+)(in) = 4 Fe(III)-[cytochrome c] + 2 H2O + 4 H(+)(out). Functionally, component of the cytochrome c oxidase, the last enzyme in the mitochondrial electron transport chain which drives oxidative phosphorylation. The respiratory chain contains 3 multisubunit complexes succinate dehydrogenase (complex II, CII), ubiquinol-cytochrome c oxidoreductase (cytochrome b-c1 complex, complex III, CIII) and cytochrome c oxidase (complex IV, CIV), that cooperate to transfer electrons derived from NADH and succinate to molecular oxygen, creating an electrochemical gradient over the inner membrane that drives transmembrane transport and the ATP synthase. Cytochrome c oxidase is the component of the respiratory chain that catalyzes the reduction of oxygen to water. Electrons originating from reduced cytochrome c in the intermembrane space (IMS) are transferred via the dinuclear copper A center (CU(A)) of subunit 2 and heme A of subunit 1 to the active site in subunit 1, a binuclear center (BNC) formed by heme A3 and copper B (CU(B)). The BNC reduces molecular oxygen to 2 water molecules using 4 electrons from cytochrome c in the IMS and 4 protons from the mitochondrial matrix. This Macaca fascicularis (Crab-eating macaque) protein is Cytochrome c oxidase subunit 2 (MT-CO2).